Reading from the N-terminus, the 297-residue chain is Protein phosphatase PTC7 homolog (297 aa).

The N-terminal 27 residues, 1–27 (MLSVLSYGRLVARAVIGGLSQTDSRDY), are a transit peptide targeting the mitochondrion. Residues 28-292 (SLVSASFGFG…DDITVLLSIV (265 aa)) enclose the PPM-type phosphatase domain. Residues Asp71, Gly72, and Asp216 each contribute to the Mn(2+) site.

It belongs to the PP2C family. The cofactor is Mg(2+). Requires Mn(2+) as cofactor.

It localises to the mitochondrion matrix. It carries out the reaction O-phospho-L-seryl-[protein] + H2O = L-seryl-[protein] + phosphate. The catalysed reaction is O-phospho-L-threonyl-[protein] + H2O = L-threonyl-[protein] + phosphate. Its function is as follows. Protein phosphatase which positively regulates biosynthesis of the ubiquinone, coenzyme Q. Dephosphorylates the ubiquinone biosynthesis protein coq7 which is likely to lead to its activation. The polypeptide is Protein phosphatase PTC7 homolog (pptc7) (Danio rerio (Zebrafish)).